The primary structure comprises 78 residues: Small ribosomal subunit protein uS19m (78 aa).

The protein belongs to the universal ribosomal protein uS19 family.

The protein resides in the mitochondrion. The protein is Small ribosomal subunit protein uS19m (RPS19) of Acanthamoeba castellanii (Amoeba).